Reading from the N-terminus, the 303-residue chain is CDAN1-interacting nuclease 1 (303 aa).

Its subcellular location is the nucleus. It localises to the cytoplasm. In terms of biological role, may play a role in erythroid cell differentiation. This is CDAN1-interacting nuclease 1 (cdin1) from Xenopus tropicalis (Western clawed frog).